Reading from the N-terminus, the 439-residue chain is Hemagglutinin-esterase (439 aa).

An N-terminal signal peptide occupies residues 1–22; sequence MGSMCIAMAPRTLLLLIGCQLA. Positions 12-132 are esterase domain 1; sequence TLLLLIGCQL…DNKRWMGNKA (121 aa). The Virion surface portion of the chain corresponds to 23–407; the sequence is LGFNEPLNVV…PVCLYDPLPV (385 aa). Ser45 acts as the Nucleophile in catalysis. Residues Cys49 and Cys70 are joined by a disulfide bond. Residues Asn94, Asn152, Asn196, Asn246, and Asn316 are each glycosylated (N-linked (GlcNAc...) asparagine; by host). Cys118 and Cys167 are oxidised to a cystine. Residues 133–281 form a receptor binding region; the sequence is RFYALVYKKM…GNYKAVSLEY (149 aa). 2 cysteine pairs are disulfide-bonded: Cys202–Cys291 and Cys210–Cys264. The interval 282-395 is esterase domain 2; sequence LLTIPSKAIC…QCPTAANIEF (114 aa). Cys322 and Cys327 are oxidised to a cystine. Asn331 and Asn337 each carry an N-linked (GlcNAc...) asparagine; by host glycan. Active-site charge relay system residues include Asp342 and His345. N-linked (GlcNAc...) asparagine; by host glycosylation is found at Asn360 and Asn374. Residues Cys363 and Cys387 are joined by a disulfide bond. The helical transmembrane segment at 408–428 threads the bilayer; that stretch reads ILLGVLLGIAVLIIVFLLFYF. Over 429–439 the chain is Intravirion; that stretch reads MTDSGVRLHEA.

This sequence belongs to the influenza type C/coronaviruses hemagglutinin-esterase family. Homodimer; disulfide-linked. Forms a complex with the M protein in the pre-Golgi. Associates then with S-M complex to form a ternary complex S-M-HE. In terms of processing, N-glycosylated in the host RER.

It localises to the virion membrane. It is found in the host cell membrane. It carries out the reaction N-acetyl-9-O-acetylneuraminate + H2O = N-acetylneuraminate + acetate + H(+). It catalyses the reaction N-acetyl-4-O-acetylneuraminate + H2O = N-acetylneuraminate + acetate + H(+). Its function is as follows. Structural protein that makes short spikes at the surface of the virus. Contains receptor binding and receptor-destroying activities. Mediates de-O-acetylation of N-acetyl-4-O-acetylneuraminic acid, which is probably the receptor determinant recognized by the virus on the surface of erythrocytes and susceptible cells. This receptor-destroying activity is important for virus release as it probably helps preventing self-aggregation and ensures the efficient spread of the progeny virus from cell to cell. May serve as a secondary viral attachment protein for initiating infection, the spike protein being the major one. May become a target for both the humoral and the cellular branches of the immune system. This is Hemagglutinin-esterase from Puffinosis coronavirus (PV).